A 580-amino-acid polypeptide reads, in one-letter code: Extracellular protease (580 aa).

Positions 1 to 32 (MSTASLRKRTGSLTILGASALTSLLLAMPAFA) are cleaved as a signal peptide. A propeptide spanning residues 33–136 (GEVYLDGLAT…VEVDQILHAT (104 aa)) is cleaved from the precursor. The Peptidase S8 domain maps to 147–465 (QWAFGTTNAG…AGIVNADAAV (319 aa)). Catalysis depends on charge relay system residues Asp-177 and His-237. 2 disulfides stabilise this stretch: Cys-225–Cys-273 and Cys-315–Cys-352. Catalysis depends on Ser-409, which acts as the Charge relay system. A disulfide bond links Cys-450 and Cys-454.

It belongs to the peptidase S8 family.

It localises to the secreted. The chain is Extracellular protease from Xanthomonas campestris pv. campestris (strain ATCC 33913 / DSM 3586 / NCPPB 528 / LMG 568 / P 25).